The following is a 301-amino-acid chain: MLASTVTGAPLQEQGRAKVNLTLRVVGRRVDGYHDLESVVAFADCADQLTLVPGPELTLTTTGPLAAACGETSDNLVLKAARLLAESVPGLKLGAFELEKVLPVAAGIGGGSADAAAALRLLARLNGLSLDDPRLQAVALKTGADVPVCVPSRACTMTGVGENLQPLALPVLPCVMINPRVPVATKDVFQALGLKPGDLLVGVTDVLTAPSWPTAGASIGDWVSALDQVKNDLEPPALKVQPIIGTVLDALRASHGVLLARMSGSGATCFAIYGSEADAKAAGAQISADHPEWWVHAGTLS.

Residue Lys-18 is part of the active site. 103-113 (PVAAGIGGGSA) is an ATP binding site. The active site involves Asp-145.

This sequence belongs to the GHMP kinase family. IspE subfamily.

The catalysed reaction is 4-CDP-2-C-methyl-D-erythritol + ATP = 4-CDP-2-C-methyl-D-erythritol 2-phosphate + ADP + H(+). It functions in the pathway isoprenoid biosynthesis; isopentenyl diphosphate biosynthesis via DXP pathway; isopentenyl diphosphate from 1-deoxy-D-xylulose 5-phosphate: step 3/6. Catalyzes the phosphorylation of the position 2 hydroxy group of 4-diphosphocytidyl-2C-methyl-D-erythritol. This is 4-diphosphocytidyl-2-C-methyl-D-erythritol kinase from Bradyrhizobium sp. (strain BTAi1 / ATCC BAA-1182).